Reading from the N-terminus, the 354-residue chain is MKVAILGAGCYRTHAASGITNFSRAAQVAKEVGIPEITMTHSTITMGAELLHLIPEVTEVVVSDPCFAEEPGIVVLDQFDYGAVMEAHLAGDAEKVMPEIRAAVKAKAKETPKPPKGCIHFVHPEKVGLKVTSNDVEAVKDADIVITWLPKGGSQPAIIEKFASEIKKGAVVTHACTIPTPKFAKIFKDLGRDDLNIISFHPGAVPEMKGQAFLSEGLADAEKVEEFYCIAKAARGEAFKMPANLISPVCDMGSAVTAPVYAAILAYRDAVTQILGAPADFAQMMADEAISQMLDLMRKEGIKNMEEKLSPKALTGTADSMCFGPLAEILPASLKVLEKHAKENKCECGCSIKP.

Belongs to the HMD family.

The catalysed reaction is 5,10-methenyl-5,6,7,8-tetrahydromethanopterin + H2 = 5,10-methylenetetrahydromethanopterin + H(+). It functions in the pathway one-carbon metabolism; methanogenesis from CO(2); 5,10-methylene-5,6,7,8-tetrahydromethanopterin from 5,10-methenyl-5,6,7,8-tetrahydromethanopterin (hydrogen route): step 1/1. In terms of biological role, catalyzes the reversible reduction of methenyl-H(4)MPT(+) to methylene-H(4)MPT. This is 5,10-methenyltetrahydromethanopterin hydrogenase from Methanococcus vannielii (strain ATCC 35089 / DSM 1224 / JCM 13029 / OCM 148 / SB).